The primary structure comprises 564 residues: MSEITLGRYLFERLNQVDVKTIFGLPGDFNLSLLDKIYEVEGMRWAGNANELNAAYAADGYARIKGMSCIITTFGVGELSALNGIAGSYAEHVGVLHVVGVPSISSQAKQLLLHHTLGNGDFTVFHRMSANISETTAMVTDIATAPAEIDRCIRTTYITQRPVYLGLPANLVDLKVPAKLLETPIDLSLKPNDPEAETEVVDTVLELIKAAKNPVILADACASRHDVKAETKKLIDATQFPSFVTPMGKGSIDEQHPRFGGVYVGTLSRPEVKEAVESADLILSVGALLSDFNTGSFSYSYKTKNIVEFHSDYIKIRNATFPGVQMKFALQKLLNAVPEAIKGYKPVPVPARVPENKSCDPATPLKQEWMWNQVSKFLQEGDVVITETGTSAFGINQTPFPNNAYGISQVLWGSIGFTTGACLGAAFAAEEIDPKKRVILFIGDGSLQLTVQEISTMIRWGLKPYLFVLNNDGYTIERLIHGEKAGYNDIQNWDHLALLPTFGAKDYENHRVATTGEWDKLTQDKEFNKNSKIRMIEVMLPVMDAPTSLIEQAKLTASINAKQE.

Residues Asp-28 and His-115 each contribute to the pyruvate site. Residues Thr-390 and 413-415 (GSI) each bind thiamine diphosphate. Residue Asp-444 coordinates Mg(2+). Residues 445–446 (GS) and 471–476 (NDGYTI) each bind thiamine diphosphate. The Mg(2+) site is built by Asn-471 and Gly-473. Glu-477 provides a ligand contact to pyruvate.

The protein belongs to the TPP enzyme family. Homotetramer. Requires Mg(2+) as cofactor. It depends on thiamine diphosphate as a cofactor.

It carries out the reaction a 2-oxocarboxylate + H(+) = an aldehyde + CO2. It catalyses the reaction pyruvate + H(+) = acetaldehyde + CO2. The polypeptide is Pyruvate decarboxylase (PDC1) (Candida glabrata (strain ATCC 2001 / BCRC 20586 / JCM 3761 / NBRC 0622 / NRRL Y-65 / CBS 138) (Yeast)).